Reading from the N-terminus, the 120-residue chain is NAD(P)H-quinone oxidoreductase subunit 3 (120 aa).

3 helical membrane passes run Phe-10–Ile-30, Met-64–Val-84, and Leu-89–Ala-109.

This sequence belongs to the complex I subunit 3 family. In terms of assembly, NDH-1 can be composed of about 15 different subunits; different subcomplexes with different compositions have been identified which probably have different functions.

Its subcellular location is the cellular thylakoid membrane. It catalyses the reaction a plastoquinone + NADH + (n+1) H(+)(in) = a plastoquinol + NAD(+) + n H(+)(out). The catalysed reaction is a plastoquinone + NADPH + (n+1) H(+)(in) = a plastoquinol + NADP(+) + n H(+)(out). Functionally, NDH-1 shuttles electrons from an unknown electron donor, via FMN and iron-sulfur (Fe-S) centers, to quinones in the respiratory and/or the photosynthetic chain. The immediate electron acceptor for the enzyme in this species is believed to be plastoquinone. Couples the redox reaction to proton translocation, and thus conserves the redox energy in a proton gradient. Cyanobacterial NDH-1 also plays a role in inorganic carbon-concentration. The polypeptide is NAD(P)H-quinone oxidoreductase subunit 3 (Prochlorococcus marinus (strain MIT 9215)).